Here is a 250-residue protein sequence, read N- to C-terminus: MALAWCVVRRSASKFASVYGGRVRSISAVANRASLARNPSSIRPFVSRALNYSTAIDRISSEQTLIRVIDSEINSALQSDNIDSDEEMTPGSFPFRIEDKPGNQNVTLTRDYNGEHIKVVVSMPSLVSDENDDDDDDDEGPSNESSIPLVVTVTKKSGLTLEFSCMAFPDEIAIDALSVKHPGDSLEDQLANEGPDFEDLDENLKKTFYKFLEIRGVKASTTNFLHEYMTRKVNREYFLWLKNVKEFMEQ.

A mitochondrion-targeting transit peptide spans 1–52 (MALAWCVVRRSASKFASVYGGRVRSISAVANRASLARNPSSIRPFVSRALNY). The tract at residues 124–147 (PSLVSDENDDDDDDDEGPSNESSI) is disordered. Positions 129-141 (DENDDDDDDDEGP) are enriched in acidic residues.

Belongs to the MAM33 family.

The protein resides in the mitochondrion matrix. This is an uncharacterized protein from Arabidopsis thaliana (Mouse-ear cress).